Reading from the N-terminus, the 867-residue chain is E3 ubiquitin-protein ligase SH3RF1 (867 aa).

Residues 12-53 form an RING-type zinc finger; that stretch reads CPVCLERLDATAKVLPCQHTFCRRCLLGIVGSRGELRCPECR. Residues 101–127 form a disordered region; that stretch reads AQGAGGSQRDPGPTGGQSQRVQAKSTP. Residues 116-125 show a composition bias toward polar residues; it reads GQSQRVQAKS. SH3 domains follow at residues 132 to 191 and 194 to 257; these read PQLP…VIKP and QPPP…FNSA. Positions 265–328 are disordered; that stretch reads DKPSEGGGDS…PPPQRHSMEI (64 aa). Low complexity predominate over residues 275-285; it reads SEGPSSSSSGP. One can recognise an SH3 3 domain in the interval 436–497; sequence QRPTVYVAMF…PGNYMSPVSR (62 aa). The tract at residues 706 to 794 is disordered; the sequence is LSNKKKLRPS…APIAPPPRQP (89 aa). The span at 760–769 shows a compositional bias: low complexity; that stretch reads SELSMSSSSS. A compositionally biased stretch (polar residues) spans 770–784; that stretch reads NTDAVTHRSSPQDNT. The region spanning 808 to 867 is the SH3 4 domain; that stretch reads IVCERYRVVVSYPPQSEAELELKEGDIVFVHKKREDGWFKGTLQRNGRTGLFPGSFVDSI.

This sequence belongs to the SH3RF family. In terms of processing, autoubiquitinated. Ubiquitinated by SH3RF2, leading to proteasome-mediated degradation.

It localises to the cytoplasm. The protein resides in the perinuclear region. It is found in the cell projection. Its subcellular location is the lamellipodium. The protein localises to the golgi apparatus. It localises to the trans-Golgi network. It catalyses the reaction S-ubiquitinyl-[E2 ubiquitin-conjugating enzyme]-L-cysteine + [acceptor protein]-L-lysine = [E2 ubiquitin-conjugating enzyme]-L-cysteine + N(6)-ubiquitinyl-[acceptor protein]-L-lysine.. It participates in protein modification; protein ubiquitination. Its function is as follows. Has E3 ubiquitin-protein ligase activity. In the absence of an external substrate, it can catalyze self-ubiquitination. Acts as a scaffold protein that contributes to the effective activation of the JNK signaling pathway. The sequence is that of E3 ubiquitin-protein ligase SH3RF1 (sh3rf1) from Danio rerio (Zebrafish).